We begin with the raw amino-acid sequence, 437 residues long: ATP-dependent RNA helicase RhlB (437 aa).

The short motif at 9-37 (QKFADLGLKPQVTEGLEKKGFEYCTPIQA) is the Q motif element. The Helicase ATP-binding domain occupies 40 to 219 (LPVLLTGQDI…FEHMHNPEHV (180 aa)). An ATP-binding site is contributed by 53–60 (AQTGTGKT). A DEAD box motif is present at residues 165 to 168 (DEAD). A Helicase C-terminal domain is found at 245 to 390 (ALLQTLIEEE…VSDYDASALI (146 aa)). Residues 395–437 (APLRMRAPRTQQRRTNTGGTRSGNRKPQGRRPRQPRQSAPKQS) form a disordered region. Over residues 403 to 413 (RTQQRRTNTGG) the composition is skewed to low complexity. A compositionally biased stretch (basic residues) spans 417 to 428 (GNRKPQGRRPRQ).

The protein belongs to the DEAD box helicase family. RhlB subfamily. As to quaternary structure, component of the RNA degradosome, which is a multiprotein complex involved in RNA processing and mRNA degradation.

The protein resides in the cytoplasm. It carries out the reaction ATP + H2O = ADP + phosphate + H(+). Its function is as follows. DEAD-box RNA helicase involved in RNA degradation. Has RNA-dependent ATPase activity and unwinds double-stranded RNA. The chain is ATP-dependent RNA helicase RhlB from Vibrio campbellii (strain ATCC BAA-1116).